A 225-amino-acid polypeptide reads, in one-letter code: Uracil-DNA glycosylase (225 aa).

Asp65 functions as the Proton acceptor in the catalytic mechanism.

This sequence belongs to the uracil-DNA glycosylase (UDG) superfamily. UNG family.

It is found in the cytoplasm. The enzyme catalyses Hydrolyzes single-stranded DNA or mismatched double-stranded DNA and polynucleotides, releasing free uracil.. Its function is as follows. Excises uracil residues from the DNA which can arise as a result of misincorporation of dUMP residues by DNA polymerase or due to deamination of cytosine. This is Uracil-DNA glycosylase from Bacillus cytotoxicus (strain DSM 22905 / CIP 110041 / 391-98 / NVH 391-98).